The sequence spans 443 residues: MDRLGSFSSDPSDKPPCRGCSSYLMEPYIKCAECGPPPFFLCLQCFTRGFEYKKHQSDHTYEIMTSDFPVLDPSWTAQEEMALLEAVMDCGFGNWQDVANQMCTKTKEECEKHYMKHFINNPLFASTLLNLKQAEEAKTADTAIPFHSADDPPRPTFDSLLSRDMAGYMPARADFIEEFDNYAEWDLRDIDFVEDDSDILHALKMAVVDIYHSRLKERQRRKKIIRDHGLINLRKFQLMERRYPKEVQDLYETMRRFARIVGPVEHDKFIESHALEFELRREIKRLQEYRTAGITNFCSARTYDHLKKTREEERLKRTMLSEVLQYIQDSSACQQWLRRQADIDSGLSPSVPMTSNSGRRSAPPLNLTGLPGTEKLNEKEKELCQMVRLVPGAYLEYKSALLNECNKQGGLRLAQARALIKIDVNKTRKIYDFLIREGYITKA.

Ser-6 carries the phosphoserine modification. The segment at 12-69 (SDKPPCRGCSSYLMEPYIKCAECGPPPFFLCLQCFTRGFEYKKHQSDHTYEIMTSDFP) adopts a ZZ-type zinc-finger fold. Positions 17, 20, 31, 34, 42, 45, 55, and 59 each coordinate Zn(2+). The region spanning 70–122 (VLDPSWTAQEEMALLEAVMDCGFGNWQDVANQMCTKTKEECEKHYMKHFINNP) is the SANT domain. Residues Lys-132 and Lys-138 each participate in a glycyl lysine isopeptide (Lys-Gly) (interchain with G-Cter in SUMO2) cross-link. Residues 347–359 (LSPSVPMTSNSGR) are compositionally biased toward polar residues. The tract at residues 347–372 (LSPSVPMTSNSGRRSAPPLNLTGLPG) is disordered. An SWIRM domain is found at 356 to 443 (NSGRRSAPPL…LIREGYITKA (88 aa)). Residues 426-435 (KTRKIYDFLI) mediate DNA binding.

In terms of assembly, interacts with GCN5 and NR3C1. Associated with the P/CAF protein in the PCAF complex. Component of the PCAF complex, at least composed of TADA2L/ADA2, TADA3L/ADA3, TAF5L/PAF65-beta, TAF6L/PAF65-alpha, TAF10/TAFII30, TAF12/TAFII20, TAF9/TAFII31 and TRRAP. Component of the ADA2A-containing complex (ATAC), composed of KAT14, KAT2A, TADA2L, TADA3L, ZZ3, MBIP, WDR5, YEATS2, CCDC101 and DR1. Interacts with CCDC134.

Its subcellular location is the nucleus. The protein localises to the chromosome. Its function is as follows. Component of the ATAC complex, a complex with histone acetyltransferase activity on histones H3 and H4. Required for the function of some acidic activation domains, which activate transcription from a distant site. Binds double-stranded DNA. Binds dinucleosomes, probably at the linker region between neighboring nucleosomes. Plays a role in chromatin remodeling. May promote TP53/p53 'Lys-321' acetylation, leading to reduced TP53 stability and transcriptional activity. May also promote XRCC6 acetylation thus facilitating cell apoptosis in response to DNA damage. The sequence is that of Transcriptional adapter 2-alpha (TADA2A) from Bos taurus (Bovine).